The chain runs to 343 residues: Thromboxane A2 receptor (343 aa).

Over 1-29 (MWPNGSSLGPCFRPTNITLEERRLIASPW) the chain is Extracellular. 2 N-linked (GlcNAc...) asparagine glycosylation sites follow: Asn4 and Asn16. The chain crosses the membrane as a helical span at residues 30-52 (FAASFCVVGLASNLLALSVLAGA). Residues 53–66 (RQGGSHTRSSFLTF) are Cytoplasmic-facing. The helical transmembrane segment at 67 to 87 (LCGLVLTDFLGLLVTGTIVVS) threads the bilayer. The Extracellular portion of the chain corresponds to 88–106 (QHAALFEWHAVDPGCRLCR). Cys105 and Cys183 are joined by a disulfide. The chain crosses the membrane as a helical span at residues 107 to 128 (FMGVVMIFFGLSPLLLGAAMAS). Over 129 to 149 (ERYLGITRPFSRPAVASQRRA) the chain is Cytoplasmic. The chain crosses the membrane as a helical span at residues 150–172 (WATVGLVWAAALALGLLPLLGVG). Topologically, residues 173–193 (RYTVQYPGSWCFLTLGAESGD) are extracellular. The helical transmembrane segment at 194 to 219 (VAFGLLFSMLGGLSVGLSFLLNTVSV) threads the bilayer. Residues 220 to 246 (ATLCHVYHGQEAAQQRPRDSEVEMMAQ) are Cytoplasmic-facing. The helical transmembrane segment at 247–270 (LLGIMVVASVCWLPLLVFIAQTVL) threads the bilayer. The Extracellular segment spans residues 271 to 289 (RNPPAMSPAGQLSRTTEKE). The helical transmembrane segment at 290–311 (LLIYLRVATWNQILDPWVYILF) threads the bilayer. Over 312-343 (RRAVLRRLQPRLSTRPRSLSLQPQLTQRSGLQ) the chain is Cytoplasmic. A phosphoserine mark is found at Ser329 and Ser331.

It belongs to the G-protein coupled receptor 1 family. In terms of assembly, interacts with RPGRIP1L. Interacts with PSMA3. Interacts with RACK1; the interaction regulates TBXA2R cell surface expression.

It localises to the cell membrane. Its function is as follows. Receptor for thromboxane A2 (TXA2), a potent stimulator of platelet aggregation. The activity of this receptor is mediated by a G-protein that activates a phosphatidylinositol-calcium second messenger system. In the kidney, the binding of TXA2 to glomerular TP receptors causes intense vasoconstriction. Activates phospholipase C. In terms of biological role, activates adenylyl cyclase. Functionally, inhibits adenylyl cyclase. The chain is Thromboxane A2 receptor (TBXA2R) from Homo sapiens (Human).